The sequence spans 352 residues: SNF1-related protein kinase regulatory subunit gamma-like PV42a (352 aa).

CBS domains follow at residues 24-106 (RNRR…LSDL), 122-196 (LEGL…FDDL), 210-281 (VNDS…ELQT), and 297-352 (KERE…STLS).

It belongs to the 5'-AMP-activated protein kinase gamma subunit family. In terms of tissue distribution, expressed highly in rosette leaves, cauline leaves, open flowers, developing siliques and dry seeds, but at a low level in stems and floral buds.

In terms of biological role, plays redundant role with PV42b in regulating male gametogenesis and pollen tube guidance. The polypeptide is SNF1-related protein kinase regulatory subunit gamma-like PV42a (PV42A) (Arabidopsis thaliana (Mouse-ear cress)).